A 395-amino-acid chain; its full sequence is MSERHLFTSESVSEGHPDKIADQISDAILDAMLAQDPQARVAVETSVTTGLVLVFGEVSTKAYVDIQKVVRDTIKSIGYVDGQYGFDGDNCAVLVSLDEQSPDIAQGVDDSLETRSGDADPLDQIGAGDQGMMFGYAINETPELMPLPIALSHRLMRKIAALRKDGTIKWLRPDAKAQVTVEYDEDNQPKRIDTVVLSTQHDPDVDLDTIRQTVIDQVIKAVLPADLLDDQTKYLVNPTGRFVIGGPQGDAGLTGRKVIVDTYGGFAHHGGGAFSGKDATKVDRSASYAARYIAKNVVAAGLADQVEVQLAYAIGVAEPVSIAVDTAGTGKVSDEALINAIRENFDLRPAGIIKMLDLQRPIYRQTAAYGHFGRTDIDLPWEHTDKVDALKAVFK.

Residue His16 coordinates ATP. Asp18 contributes to the Mg(2+) binding site. Residue Glu44 participates in K(+) binding. 2 residues coordinate L-methionine: Glu57 and Gln100. The flexible loop stretch occupies residues 100-110 (QSPDIAQGVDD). Residues 174–176 (DAK), 241–242 (RF), Asp250, 256–257 (RK), Ala273, and Lys277 each bind ATP. Asp250 contributes to the L-methionine binding site. Position 281 (Lys281) interacts with L-methionine.

The protein belongs to the AdoMet synthase family. Homotetramer; dimer of dimers. Mg(2+) serves as cofactor. K(+) is required as a cofactor.

It is found in the cytoplasm. It carries out the reaction L-methionine + ATP + H2O = S-adenosyl-L-methionine + phosphate + diphosphate. It functions in the pathway amino-acid biosynthesis; S-adenosyl-L-methionine biosynthesis; S-adenosyl-L-methionine from L-methionine: step 1/1. Functionally, catalyzes the formation of S-adenosylmethionine (AdoMet) from methionine and ATP. The overall synthetic reaction is composed of two sequential steps, AdoMet formation and the subsequent tripolyphosphate hydrolysis which occurs prior to release of AdoMet from the enzyme. This Lactiplantibacillus plantarum (strain ATCC BAA-793 / NCIMB 8826 / WCFS1) (Lactobacillus plantarum) protein is S-adenosylmethionine synthase.